The following is a 256-amino-acid chain: Thiazole synthase (256 aa).

Lys95 (schiff-base intermediate with DXP) is an active-site residue. Residues Gly156, 182–183, and 204–205 each bind 1-deoxy-D-xylulose 5-phosphate; these read AG and NT.

It belongs to the ThiG family. In terms of assembly, homotetramer. Forms heterodimers with either ThiH or ThiS.

The protein resides in the cytoplasm. It carries out the reaction [ThiS sulfur-carrier protein]-C-terminal-Gly-aminoethanethioate + 2-iminoacetate + 1-deoxy-D-xylulose 5-phosphate = [ThiS sulfur-carrier protein]-C-terminal Gly-Gly + 2-[(2R,5Z)-2-carboxy-4-methylthiazol-5(2H)-ylidene]ethyl phosphate + 2 H2O + H(+). Its pathway is cofactor biosynthesis; thiamine diphosphate biosynthesis. In terms of biological role, catalyzes the rearrangement of 1-deoxy-D-xylulose 5-phosphate (DXP) to produce the thiazole phosphate moiety of thiamine. Sulfur is provided by the thiocarboxylate moiety of the carrier protein ThiS. In vitro, sulfur can be provided by H(2)S. In Salmonella agona (strain SL483), this protein is Thiazole synthase.